The sequence spans 245 residues: 1-(5-phosphoribosyl)-5-[(5-phosphoribosylamino)methylideneamino] imidazole-4-carboxamide isomerase (245 aa).

The active-site Proton acceptor is Asp-7. Asp-129 (proton donor) is an active-site residue.

The protein belongs to the HisA/HisF family.

Its subcellular location is the cytoplasm. The catalysed reaction is 1-(5-phospho-beta-D-ribosyl)-5-[(5-phospho-beta-D-ribosylamino)methylideneamino]imidazole-4-carboxamide = 5-[(5-phospho-1-deoxy-D-ribulos-1-ylimino)methylamino]-1-(5-phospho-beta-D-ribosyl)imidazole-4-carboxamide. It participates in amino-acid biosynthesis; L-histidine biosynthesis; L-histidine from 5-phospho-alpha-D-ribose 1-diphosphate: step 4/9. The polypeptide is 1-(5-phosphoribosyl)-5-[(5-phosphoribosylamino)methylideneamino] imidazole-4-carboxamide isomerase (Shewanella piezotolerans (strain WP3 / JCM 13877)).